The sequence spans 410 residues: Segmentation protein fushi tarazu (410 aa).

Disordered stretches follow at residues 71-93, 138-157, and 175-221; these read TQTVPPVQPTTPPPKATKRKAED, PAVSTKVTASPAPSYDQEYV, and SPQS…SAVS. The span at 76–85 shows a compositional bias: pro residues; it reads PVQPTTPPPK. A compositionally biased stretch (pro residues) spans 190–199; the sequence is TPPPTTPTSL. Residues 254–313 constitute a DNA-binding region (homeobox); it reads SKRTRQTYTRYQTLELEKEFHFNRYITRRRRIDIANALSLSERQIKIWFQNRRMKSKKDR.

The protein belongs to the Antp homeobox family. Post-translationally, phosphorylated at as many as 16 sites. As to expression, expressed early in development in a striped pattern at the blastoderm stage. Later expressed in a specific subset of neuronal precursor cells, neurons and glia in the developing CNS. Between 5 and 6 hours of development, found in the midline precursor-2 cells in a segmentally repeating pattern. Expression in many other neuronal precursors follows and reaches a second peak of abundance at 9 hours of development. Expressed in the hindgut between 11-15 hours of development.

The protein resides in the nucleus. Its function is as follows. May play a role in determining neuronal identity, may be directly involved in specifying identity of individual neurons. Required during embryogenesis for the process of body segmentation. Homeotic protein, required in alternating segment primordia, it specifies the correct number of segments. This Drosophila melanogaster (Fruit fly) protein is Segmentation protein fushi tarazu (ftz).